The following is a 311-amino-acid chain: Mediator of RNA polymerase II transcription subunit 27-B (311 aa).

Belongs to the Mediator complex subunit 27 family. As to quaternary structure, component of the Mediator complex.

It localises to the nucleus. Functionally, component of the Mediator complex, a coactivator involved in the regulated transcription of nearly all RNA polymerase II-dependent genes. Mediator functions as a bridge to convey information from gene-specific regulatory proteins to the basal RNA polymerase II transcription machinery. Mediator is recruited to promoters by direct interactions with regulatory proteins and serves as a scaffold for the assembly of a functional preinitiation complex with RNA polymerase II and the general transcription factors. The chain is Mediator of RNA polymerase II transcription subunit 27-B (med27-b) from Xenopus laevis (African clawed frog).